The following is an 83-amino-acid chain: MASGSCSAFNFNQMLDGVCKYVQGVQQYLTELETSTQGTVDLGTMFNLQFRMQILSQYMESVSNILTAVNTEMITMARAVKGS.

This sequence belongs to the chlamydial CPn_0710/CT_666/TC_0037 family.

This is an uncharacterized protein from Chlamydia trachomatis serovar D (strain ATCC VR-885 / DSM 19411 / UW-3/Cx).